We begin with the raw amino-acid sequence, 271 residues long: Elongation factor Ts (271 aa).

Positions 76–79 (TDFV) are involved in Mg(2+) ion dislocation from EF-Tu.

Belongs to the EF-Ts family.

It is found in the cytoplasm. In terms of biological role, associates with the EF-Tu.GDP complex and induces the exchange of GDP to GTP. It remains bound to the aminoacyl-tRNA.EF-Tu.GTP complex up to the GTP hydrolysis stage on the ribosome. In Saccharopolyspora erythraea (strain ATCC 11635 / DSM 40517 / JCM 4748 / NBRC 13426 / NCIMB 8594 / NRRL 2338), this protein is Elongation factor Ts.